The following is a 172-amino-acid chain: 3-phenylpropionate/cinnamic acid dioxygenase subunit beta (172 aa).

Belongs to the bacterial ring-hydroxylating dioxygenase beta subunit family. As to quaternary structure, this dioxygenase system consists of four proteins: the two subunits of the hydroxylase component (HcaE and HcaF), a ferredoxin (HcaC) and a ferredoxin reductase (HcaD).

It catalyses the reaction 3-phenylpropanoate + NADH + O2 + H(+) = 3-(cis-5,6-dihydroxycyclohexa-1,3-dien-1-yl)propanoate + NAD(+). It carries out the reaction (E)-cinnamate + NADH + O2 + H(+) = (2E)-3-(cis-5,6-dihydroxycyclohexa-1,3-dien-1-yl)prop-2-enoate + NAD(+). Its pathway is aromatic compound metabolism; 3-phenylpropanoate degradation. Part of the multicomponent 3-phenylpropionate dioxygenase. Converts 3-phenylpropionic acid (PP) and cinnamic acid (CI) into 3-phenylpropionate-dihydrodiol (PP-dihydrodiol) and cinnamic acid-dihydrodiol (CI-dihydrodiol), respectively. This Shigella sonnei (strain Ss046) protein is 3-phenylpropionate/cinnamic acid dioxygenase subunit beta.